A 64-amino-acid polypeptide reads, in one-letter code: Ribosome biogenesis protein Nop10 (64 aa).

This sequence belongs to the NOP10 family.

Involved in ribosome biogenesis; more specifically in 18S rRNA pseudouridylation and in cleavage of pre-rRNA. The protein is Ribosome biogenesis protein Nop10 of Ignicoccus hospitalis (strain KIN4/I / DSM 18386 / JCM 14125).